Consider the following 1204-residue polypeptide: Exportin-5 (1204 aa).

At alanine 2 the chain carries N-acetylalanine. Residues 2-108 are necessary for interaction with Ran; the sequence is AMDQVNALCE…ANGTLNILEE (107 aa). Lysine 396 carries the post-translational modification N6-acetyllysine. The interval 533 to 640 is necessary for interaction with ILF3; it reads ELLQMVLNFD…KQLLSNELLL (108 aa). Positions 641 to 642 are pre-miRNA binding; sequence TQ. Serine 826 is modified (phosphoserine).

Belongs to the exportin family. In terms of assembly, component of a nuclear export receptor complex composed of XPO5, RAN, dsRNA-binding proteins and dsRNA. Found in a nuclear export complex with XPO5, RAN, EEF1A1, and aminoacylated tRNA. Found in a nuclear export complex with XPO5, RAN, ILF3 and dsRNA. Found in a nuclear export complex with XPO5, RAN and pre-miRNA. Found in a nuclear export complex with XPO5, RAN, ILF3 and minihelix VA1 dsRNA. Found in a nuclear export complex with XPO5, RAN, ILF3, ZNF346 and dsRNA. Interacts with EEF1A1, ILF3, NUP153, NUP214 and ZNF346. Interacts with RAN and cargo proteins in a GTP-dependent manner. Interacts with isoform 5 of ADAR/ADAR1 (via DRBM domains). Interacts with SMAD4; mediates nuclear export of SMAD4. Interacts with RAN (GTP-bound form). Expressed in heart, brain, placenta, lung, skeletal muscle, kidney and pancreas.

It localises to the nucleus. The protein resides in the cytoplasm. Mediates the nuclear export of proteins bearing a double-stranded RNA binding domain (dsRBD) and double-stranded RNAs (cargos). XPO5 in the nucleus binds cooperatively to the RNA and to the GTPase Ran in its active GTP-bound form. Proteins containing dsRBDs can associate with this trimeric complex through the RNA. Docking of this complex to the nuclear pore complex (NPC) is mediated through binding to nucleoporins. Upon transit of a nuclear export complex into the cytoplasm, hydrolysis of Ran-GTP to Ran-GDP (induced by RANBP1 and RANGAP1, respectively) cause disassembly of the complex and release of the cargo from the export receptor. XPO5 then returns to the nuclear compartment by diffusion through the nuclear pore complex, to mediate another round of transport. The directionality of nuclear export is thought to be conferred by an asymmetric distribution of the GTP- and GDP-bound forms of Ran between the cytoplasm and nucleus. Overexpression may in some circumstances enhance RNA-mediated gene silencing (RNAi). Mediates nuclear export of isoform 5 of ADAR/ADAR1 in a RanGTP-dependent manner. Its function is as follows. Mediates the nuclear export of micro-RNA precursors, which form short hairpins. Also mediates the nuclear export of synthetic short hairpin RNAs used for RNA interference. In some circumstances can also mediate the nuclear export of deacylated and aminoacylated tRNAs. Specifically recognizes dsRNAs that lack a 5'-overhang in a sequence-independent manner, have only a short 3'-overhang, and that have a double-stranded length of at least 15 base-pairs. Binding is dependent on Ran-GTP. Functionally, (Microbial infection) Mediates the nuclear export of adenovirus VA1 dsRNA. The chain is Exportin-5 (XPO5) from Homo sapiens (Human).